The chain runs to 394 residues: GTPase Era, mitochondrial (394 aa).

One can recognise an Era-type G domain in the interval 32–280; that stretch reads KCLQLAVIGA…RDHLMSISPQ (249 aa). A G1 region spans residues 40-47; it reads GAPNVGKS. Residue 40–47 participates in GTP binding; that stretch reads GAPNVGKS. Positions 66–70 are G2; that stretch reads DTTTR. The tract at residues 87 to 90 is G3; sequence DSPG. GTP-binding positions include 87–91 and 160–163; these read DSPGA and NKID. The tract at residues 160-163 is G4; that stretch reads NKID. A G5 region spans residues 259–261; that stretch reads VSS.

Belongs to the TRAFAC class TrmE-Era-EngA-EngB-Septin-like GTPase superfamily. Era GTPase family.

The protein localises to the mitochondrion matrix. It localises to the mitochondrion inner membrane. Probable GTPase that plays a role in the mitochondrial ribosomal small subunit assembly. Specifically binds the 12S mitochondrial rRNA (12S mt-rRNA) to a 33 nucleotide section delineating the 3' terminal stem-loop region. May act as a chaperone that protects the 12S mt-rRNA on the 28S mitoribosomal subunit during ribosomal small subunit assembly. May play a role in positively regulating mitochondrial function. Plays a role in fertility. This is GTPase Era, mitochondrial from Caenorhabditis elegans.